Reading from the N-terminus, the 151-residue chain is UPF0178 protein GSU0171 (151 aa).

This sequence belongs to the UPF0178 family.

In Geobacter sulfurreducens (strain ATCC 51573 / DSM 12127 / PCA), this protein is UPF0178 protein GSU0171.